A 132-amino-acid chain; its full sequence is SH2 domain-containing protein 1B (132 aa).

An SH2 domain is found at 5–101; it reads YYHGRLTKQD…GMVVHLLKPI (97 aa). The residue at position 127 (tyrosine 127) is a Phosphotyrosine.

In terms of assembly, binds to the phosphorylated receptors CD84, SLAMF1, LY9 and CD244. Does not bind to non-phosphorylated SLAMF1. Interacts with SLAMF7 (via ITSM phosphorylated on 'Tyr-304'). Interacts with Src kinases HCK, LYN, FYN, FGR and LCK (via kinase domains). Interacts (phosphorylated at Tyr-127) with PLCG1.

Functionally, cytoplasmic adapter regulating receptors of the signaling lymphocytic activation molecule (SLAM) family such as CD84, SLAMF1, LY9 and CD244. In SLAM signaling seems to cooperate with SH2D1A/SAP. Plays a role in regulation of effector functions of natural killer (NK) cells by controlling signal transduction through CD244/2B4 without effecting its tyrosine phosphorylation; downstream signaling involves PLCG1 and ERK activation. Activation of SLAMF7-mediated NK cell function does not effect receptor tyrosine phosphorylation but distal signaling. In the context of NK cell-mediated cytotoxicity does not enhance conjugate formation with target cells but stimulates polarization of the microtubule-organizing center and cytotoxic granules toward the NK cell synapse. Negatively regulates CD40-induced cytokine production in dendritic cells downstream of SLAM family receptors probably by inducing activation of the PI3K pathway to inhibit p38 MAPK and JNK activation. This is SH2 domain-containing protein 1B (SH2D1B) from Homo sapiens (Human).